An 853-amino-acid polypeptide reads, in one-letter code: DNA mismatch repair protein MutS (853 aa).

Residue Gly-614–Ser-621 coordinates ATP.

Belongs to the DNA mismatch repair MutS family.

Its function is as follows. This protein is involved in the repair of mismatches in DNA. It is possible that it carries out the mismatch recognition step. This protein has a weak ATPase activity. The chain is DNA mismatch repair protein MutS from Escherichia fergusonii (strain ATCC 35469 / DSM 13698 / CCUG 18766 / IAM 14443 / JCM 21226 / LMG 7866 / NBRC 102419 / NCTC 12128 / CDC 0568-73).